A 596-amino-acid polypeptide reads, in one-letter code: MSEVEYNQENTHYAEVDNFDRDAMSQTRARSRSPVAGGAPSSDRRDRDRTDRTDRTDRSDRPRSFNDRAIASQHAATQASRKSQKNCRVYVGNLSYGVKWNTLKDFMREAVDVLLGDTRDGSITRARNASAARWLNESRRQCGWIADGKVLRFCPGWVTGGILQHLNHVRVAIQHSTRFPSFHRQPSIVYTAGHVVFSEVLTLPNGSSKGCGIVEYSTPEEAQKAIREMTNKQLEGRQVFVREDREDEVRYGTSPGGPPRGGGRGGLGGSSGRGSFGPPVRGGFYGGPPPPPYGGFGGGAPTQLFIGNLPFDVSWQDLKDLFRSAGNITRADINMGHDGRSKGSGIVAYADSNDASNAIAMYHGYEFRGRMLEVRLDKFASAPPMDPYGRAGYGPPPRGGRGGFGGAYGGRGGYGGRGGYGSGYGDPYGGGYSHEAYGGAYGGGYGGGYGDRHGAAGGYSTRASGPTSARAPAPPAAPSQQIFVKNLPWSTSNEDLVELFQTTGKVDEAEIVIGGGRSKGCGVVQFATVEDAETAIAKFNNYVYGGRPLDIEFNRRWTKFGTGGGSVNGGNDGNAPMVEVSAQDDEDGDAPVPMQG.

Residues 1–11 are compositionally biased toward polar residues; that stretch reads MSEVEYNQENT. Disordered regions lie at residues 1-83 and 244-279; these read MSEV…SRKS and DRED…FGPP. Composition is skewed to basic and acidic residues over residues 12-23 and 42-66; these read HYAEVDNFDRDA and SDRR…RSFN. One can recognise an RRM 1 domain in the interval 182 to 246; that stretch reads FHRQPSIVYT…RQVFVREDRE (65 aa). Residues 259-275 show a composition bias toward gly residues; it reads PRGGGRGGLGGSSGRGS. Residues 302 to 379 form the RRM 2 domain; that stretch reads TQLFIGNLPF…RMLEVRLDKF (78 aa). The segment at 458-478 is disordered; the sequence is GYSTRASGPTSARAPAPPAAP. The RRM 3 domain occupies 480–556; sequence QQIFVKNLPW…RPLDIEFNRR (77 aa). A compositionally biased stretch (gly residues) spans 563-572; the sequence is GGGSVNGGND. A disordered region spans residues 563-596; that stretch reads GGGSVNGGNDGNAPMVEVSAQDDEDGDAPVPMQG.

Its subcellular location is the nucleus. Functionally, binds to intron-containing transcripts and is involved in quality control for the export of spliced mRNAs from the nucleus. Binds to pre-mRNAs until splicing is completed or until faulty mRNAs are degraded. The protein is Serine/arginine (SR)-type shuttling mRNA binding protein of Mycosarcoma maydis (Corn smut fungus).